The sequence spans 189 residues: Isopentenyl-diphosphate Delta-isomerase 2 (189 aa).

The Mn(2+) site is built by H24 and H30. Positions 28 to 160 (ALHRAISIFV…PETYSFWLAA (133 aa)) constitute a Nudix hydrolase domain. C65 is an active-site residue. C65 serves as a coordination point for Mg(2+). Residue H67 coordinates Mn(2+). Residue E85 coordinates Mg(2+). Residues E110 and E112 each contribute to the Mn(2+) site. Residue E112 is part of the active site.

It belongs to the IPP isomerase type 1 family. The cofactor is Mg(2+). Requires Mn(2+) as cofactor.

Its subcellular location is the cytoplasm. It carries out the reaction isopentenyl diphosphate = dimethylallyl diphosphate. It participates in isoprenoid biosynthesis; dimethylallyl diphosphate biosynthesis; dimethylallyl diphosphate from isopentenyl diphosphate: step 1/1. Catalyzes the 1,3-allylic rearrangement of the homoallylic substrate isopentenyl (IPP) to its highly electrophilic allylic isomer, dimethylallyl diphosphate (DMAPP). This chain is Isopentenyl-diphosphate Delta-isomerase 2, found in Aromatoleum aromaticum (strain DSM 19018 / LMG 30748 / EbN1) (Azoarcus sp. (strain EbN1)).